Here is a 264-residue protein sequence, read N- to C-terminus: Phosphoribosylaminoimidazole-succinocarboxamide synthase (264 aa).

It belongs to the SAICAR synthetase family.

The catalysed reaction is 5-amino-1-(5-phospho-D-ribosyl)imidazole-4-carboxylate + L-aspartate + ATP = (2S)-2-[5-amino-1-(5-phospho-beta-D-ribosyl)imidazole-4-carboxamido]succinate + ADP + phosphate + 2 H(+). It participates in purine metabolism; IMP biosynthesis via de novo pathway; 5-amino-1-(5-phospho-D-ribosyl)imidazole-4-carboxamide from 5-amino-1-(5-phospho-D-ribosyl)imidazole-4-carboxylate: step 1/2. The protein is Phosphoribosylaminoimidazole-succinocarboxamide synthase (purC) of Synechocystis sp. (strain ATCC 27184 / PCC 6803 / Kazusa).